A 597-amino-acid chain; its full sequence is Centrosomal protein of 70 kDa (597 aa).

Residues 1-24 (MFPVAPKPQDSNQPSDRLMTEKQQ) are disordered. Coiled-coil stretches lie at residues 66–179 (MRQN…QTEV) and 254–320 (TYKG…QELI). Residues 483–516 (NGVYPRMNEVYTRLGEMNNAVRNLQELLELDSSS) form a TPR repeat.

As to quaternary structure, directly interacts with tubulin-gamma; this interaction determines centrosomal localization.

The protein resides in the cytoplasm. It localises to the cytoskeleton. Its subcellular location is the microtubule organizing center. The protein localises to the centrosome. Functionally, plays a role in the organization of both preexisting and nascent microtubules in interphase cells. During mitosis, required for the organization and orientation of the mitotic spindle. In Macaca fascicularis (Crab-eating macaque), this protein is Centrosomal protein of 70 kDa (CEP70).